The sequence spans 64 residues: MPKMKTDKGVAKRFKKTANGFKRKQAHLRHILTKKSTKRKRHLRAKCQVAKSDVPAIARQLPYA.

It belongs to the bacterial ribosomal protein bL35 family.

This chain is Large ribosomal subunit protein bL35, found in Shewanella sediminis (strain HAW-EB3).